Reading from the N-terminus, the 656-residue chain is Threonine--tRNA ligase (656 aa).

In terms of domain architecture, TGS spans 1–64 (MAEAASLTFP…ERSGKIEIIT (64 aa)). The catalytic stretch occupies residues 246-548 (DHRRLGREMD…LIENYAGHFP (303 aa)). Positions 342, 393, and 525 each coordinate Zn(2+).

The protein belongs to the class-II aminoacyl-tRNA synthetase family. Homodimer. Zn(2+) serves as cofactor.

Its subcellular location is the cytoplasm. The enzyme catalyses tRNA(Thr) + L-threonine + ATP = L-threonyl-tRNA(Thr) + AMP + diphosphate + H(+). Catalyzes the attachment of threonine to tRNA(Thr) in a two-step reaction: L-threonine is first activated by ATP to form Thr-AMP and then transferred to the acceptor end of tRNA(Thr). Also edits incorrectly charged L-seryl-tRNA(Thr). The sequence is that of Threonine--tRNA ligase from Chelativorans sp. (strain BNC1).